A 189-amino-acid polypeptide reads, in one-letter code: Recombination protein RecR (189 aa).

The C4-type zinc-finger motif lies at 48–63 (CQTCFHLSAEPTCEIC). Positions 71–165 (GMLCVVADSR…EVSRIAYGLP (95 aa)) constitute a Toprim domain.

This sequence belongs to the RecR family.

May play a role in DNA repair. It seems to be involved in an RecBC-independent recombinational process of DNA repair. It may act with RecF and RecO. This chain is Recombination protein RecR, found in Synechococcus sp. (strain CC9311).